Here is a 181-residue protein sequence, read N- to C-terminus: Peptidyl-tRNA hydrolase (181 aa).

Y14 serves as a coordination point for tRNA. The active-site Proton acceptor is H19. TRNA-binding residues include F61, N63, and N107.

It belongs to the PTH family. In terms of assembly, monomer.

It is found in the cytoplasm. It catalyses the reaction an N-acyl-L-alpha-aminoacyl-tRNA + H2O = an N-acyl-L-amino acid + a tRNA + H(+). Functionally, hydrolyzes ribosome-free peptidyl-tRNAs (with 1 or more amino acids incorporated), which drop off the ribosome during protein synthesis, or as a result of ribosome stalling. In terms of biological role, catalyzes the release of premature peptidyl moieties from peptidyl-tRNA molecules trapped in stalled 50S ribosomal subunits, and thus maintains levels of free tRNAs and 50S ribosomes. The polypeptide is Peptidyl-tRNA hydrolase (Campylobacter fetus subsp. fetus (strain 82-40)).